A 239-amino-acid polypeptide reads, in one-letter code: DNA repair protein RecO (239 aa).

This sequence belongs to the RecO family.

In terms of biological role, involved in DNA repair and RecF pathway recombination. The polypeptide is DNA repair protein RecO (Cereibacter sphaeroides (strain KD131 / KCTC 12085) (Rhodobacter sphaeroides)).